The primary structure comprises 335 residues: 2-keto-3-deoxygluconate permease (335 aa).

A run of 10 helical transmembrane segments spans residues 10-30 (IPGG…TAAP), 42-62 (GIIT…GASI), 77-97 (LVLT…QLLP), 100-120 (GIEV…AMDM), 141-161 (AFVL…LGSA), 163-183 (LASF…IGFA), 200-220 (QTLI…GVIL), 224-244 (LLGI…LIIA), 254-274 (TAGL…VIIA), and 289-309 (ALVA…TAMY).

This sequence belongs to the KdgT transporter family.

The protein localises to the cell inner membrane. It carries out the reaction 2-dehydro-3-deoxy-D-gluconate(in) + H(+)(in) = 2-dehydro-3-deoxy-D-gluconate(out) + H(+)(out). In terms of biological role, catalyzes the proton-dependent uptake of 2-keto-3-deoxygluconate (KDG) into the cell. The protein is 2-keto-3-deoxygluconate permease of Tolumonas auensis (strain DSM 9187 / NBRC 110442 / TA 4).